Reading from the N-terminus, the 366-residue chain is RNA 3'-terminal phosphate cyclase (366 aa).

The ATP site is built by Gln-104, Pro-131, Tyr-294, Asp-297, Gln-298, and His-320. His-320 (tele-AMP-histidine intermediate) is an active-site residue.

This sequence belongs to the RNA 3'-terminal cyclase family. Type 1 subfamily. Detected in retinal ganglion cells (RGCs) (at protein level).

The protein resides in the nucleus. It is found in the nucleoplasm. It carries out the reaction a 3'-end 3'-phospho-ribonucleotide-RNA + ATP = a 3'-end 2',3'-cyclophospho-ribonucleotide-RNA + AMP + diphosphate. Catalyzes the conversion of 3'-phosphate to a 2',3'-cyclic phosphodiester at the end of RNA. The mechanism of action of the enzyme occurs in 3 steps: (A) adenylation of the enzyme by ATP; (B) transfer of adenylate to an RNA-N3'P to produce RNA-N3'PP5'A; (C) and attack of the adjacent 2'-hydroxyl on the 3'-phosphorus in the diester linkage to produce the cyclic end product. Likely functions in some aspects of cellular RNA processing. Function plays an important role in regulating axon regeneration by inhibiting central nervous system (CNS) axon regeneration following optic nerve injury. The protein is RNA 3'-terminal phosphate cyclase of Mus musculus (Mouse).